A 345-amino-acid polypeptide reads, in one-letter code: Histidinol-phosphate aminotransferase (345 aa).

Lysine 205 carries the N6-(pyridoxal phosphate)lysine modification.

The protein belongs to the class-II pyridoxal-phosphate-dependent aminotransferase family. Histidinol-phosphate aminotransferase subfamily. Homodimer. Pyridoxal 5'-phosphate serves as cofactor.

The enzyme catalyses L-histidinol phosphate + 2-oxoglutarate = 3-(imidazol-4-yl)-2-oxopropyl phosphate + L-glutamate. Its pathway is amino-acid biosynthesis; L-histidine biosynthesis; L-histidine from 5-phospho-alpha-D-ribose 1-diphosphate: step 7/9. This Parabacteroides distasonis (strain ATCC 8503 / DSM 20701 / CIP 104284 / JCM 5825 / NCTC 11152) protein is Histidinol-phosphate aminotransferase.